We begin with the raw amino-acid sequence, 335 residues long: Transcription factor E2F5 (335 aa).

Residues 1-18 (MAAAEPTSSAQPTPQAQA) are compositionally biased toward low complexity. The disordered stretch occupies residues 1–40 (MAAAEPTSSAQPTPQAQAQPPPHGAPSSQPSAALAGGSSR). The DNA-binding element occupies 37–108 (GSSRHEKSLG…KNSIQWKGVG (72 aa)). Residues 66–88 (LKAAADTLAVRQKRRIYDITNVL) form a leucine-zipper region. Positions 71 to 108 (DTLAVRQKRRIYDITNVLEGIDLIEKKSKNSIQWKGVG) match the DEF box motif. The tract at residues 109–205 (AGCNTKEVID…GQNGQKKYQI (97 aa)) is dimerization. A disordered region spans residues 226–285 (SKPVVFPVPPPDDLTQPSSQSSTSVTPQKSTMAAQNLPEQHVSERSQTFQQTPAAEVSSG). Residues 238–256 (DLTQPSSQSSTSVTPQKST) show a composition bias toward low complexity. Residues 277–335 (TPAAEVSSGSISGDIIDELMSSDVFPLLRLSPTPADDYNFNLDDNEGVCDLFDVQILNY) form a transactivation region. The segment at 312–329 (DDYNFNLDDNEGVCDLFD) is RBL2 association.

This sequence belongs to the E2F/DP family. In terms of assembly, component of the DRTF1/E2F transcription factor complex. Binds cooperatively with DP-1 to E2F sites. Interaction with retinoblastoma protein RB1 or proteins RBL1 and RBL2 inhibits the E2F transactivation domain. Component of the DREAM complex (also named LINC complex) at least composed of E2F4, E2F5, LIN9, LIN37, LIN52, LIN54, MYBL1, MYBL2, RBL1, RBL2, RBBP4, TFDP1 and TFDP2. The complex exists in quiescent cells where it represses cell cycle-dependent genes. It dissociates in S phase when LIN9, LIN37, LIN52 and LIN54 form a subcomplex that binds to MYBL2.

The protein resides in the nucleus. Functionally, transcriptional activator that binds to E2F sites, these sites are present in the promoter of many genes whose products are involved in cell proliferation. May mediate growth factor-initiated signal transduction. It is likely involved in the early responses of resting cells to growth factor stimulation. Specifically required for multiciliate cell differentiation: together with MCIDAS and E2F5, binds and activate genes required for centriole biogenesis. The sequence is that of Transcription factor E2F5 (E2f5) from Mus musculus (Mouse).